The following is a 155-amino-acid chain: UPF0260 protein NGR_c07710 (155 aa).

Belongs to the UPF0260 family.

This chain is UPF0260 protein NGR_c07710, found in Sinorhizobium fredii (strain NBRC 101917 / NGR234).